Reading from the N-terminus, the 551-residue chain is Chitinase (551 aa).

A signal peptide spans 1 to 17 (MLYKLLNVLWLVAVSNA). The chitin binding domain (CBD) stretch occupies residues 1–149 (MLYKLLNVLW…NKPGRREDKI (149 aa)). Residues 148–548 (KIVAAYFVEW…NAINAQFKPK (401 aa)) enclose the GH18 domain. Asn-173 is a glycosylation site (N-linked (GlcNAc...) asparagine; by host). Glu-305 acts as the Proton donor in catalysis. The N-linked (GlcNAc...) asparagine; by host glycan is linked to Asn-444. The Prevents secretion from ER motif lies at 548-551 (KDEL).

This sequence belongs to the glycosyl hydrolase 18 family. Chitinase class II subfamily. In terms of assembly, interacts with host VCATH.

It is found in the host endoplasmic reticulum lumen. The enzyme catalyses Random endo-hydrolysis of N-acetyl-beta-D-glucosaminide (1-&gt;4)-beta-linkages in chitin and chitodextrins.. Its function is as follows. Plays a role in host liquefaction to facilitate horizontal transmission of the virus by hydrolyzing beta-chitin and by regulating the cysteine protease VCATH. Localized in the host reticulum endoplasmic via its KDEL motif, interacts with and thus prevents VCATH secretion before host cell lysis occurs. This chain is Chitinase (CHIA), found in Lepidoptera (butterflies and moths).